The sequence spans 242 residues: Carbendazim hydrolyzing esterase (242 aa).

The active-site Acyl-ester intermediate is the serine 77.

This sequence belongs to the AB hydrolase superfamily.

It localises to the secreted. The catalysed reaction is carbendazim + H2O = 2-aminobenzimidazole + methanol + CO2. It carries out the reaction carbendazim + H2O = N-(1H-1,3-benzodiazol-2-yl)carbamate + methanol + H(+). The enzyme catalyses N-(1H-1,3-benzodiazol-2-yl)carbamate + H(+) = 2-aminobenzimidazole + CO2. In terms of biological role, catalyzes the hydrolysis of the fungicide carbendazim (methyl-1H-benzimidazol-2-ylcarbamate or MBC) to 2-aminobenzimidazole (2-AB). Following hydrolysis of the carbamate ester, the carbamate decarboxylates spontaneously. Can hydrolyze model carboxylesters such as methyl salicylate, alpha-naphthyl acetate and p-nitrophenyl acetate. In addition, shows substantial hydrolytic activity in vitro against widespread pollutants with carboxylester, carbamate and amide linkages, such as dimethyl phthalate, propanil and chlorpropham. In Nocardioides sp. (strain SG-4G), this protein is Carbendazim hydrolyzing esterase.